We begin with the raw amino-acid sequence, 1035 residues long: GRB10-interacting GYF protein 1 (1035 aa).

Phosphoserine occurs at positions 24, 28, 137, and 157. Residues 105-422 (KGAGPPLAGT…AGPPGDLEDD (318 aa)) are disordered. Basic and acidic residues-rich tracts occupy residues 148–179 (SPRE…RCGF) and 186–203 (PRKE…SLRE). S230 is subject to Phosphoserine. The span at 239-267 (GWREHGERRRKFEFDLRGDRGGCGEEEGR) shows a compositional bias: basic and acidic residues. Acidic residues-rich tracts occupy residues 295–304 (CLDDEDEEMG) and 324–349 (PEEQ…EEGP). S341 is modified (phosphoserine). Residues 367–378 (SSPSPLPTLGPL) are compositionally biased toward low complexity. The span at 388–401 (TAEKEPPAAEDDIR) shows a compositional bias: basic and acidic residues. Position 406 is a phosphoserine (S406). The segment covering 406–417 (SPGVGSSAGPPG) has biased composition (low complexity). The 49-residue stretch at 474 to 522 (ARKWFYKDPQGEIQGPFTTQEMAEWFQAGYFSMSLLVKRGCDEGFQPLG) folds into the GYF domain. Residues S538 and S638 each carry the phosphoserine modification. Disordered stretches follow at residues 621–640 (PPRG…LSVP), 696–724 (KREE…QEEE), and 825–879 (WGGP…RPIR). Residues 629–639 (LLPTMSRSLSV) are compositionally biased toward polar residues. Basic and acidic residues predominate over residues 696-722 (KREEEERKRREEKRRQQQQEEQKRRQE). Over residues 857 to 874 (LKNSRSSPSLSDSYSHLS) the composition is skewed to low complexity. S862 bears the Phosphoserine mark.

The protein belongs to the GIGYF family. In terms of assembly, interacts with GRB10. This transient binding is increased under IGF1 stimulation and leads to recruitment of GIGYF1/GRB10 complex to IGF1 receptor. Interacts with DDX6.

In terms of biological role, may act cooperatively with GRB10 to regulate tyrosine kinase receptor signaling. May increase IGF1 receptor phosphorylation under IGF1 stimulation as well as phosphorylation of IRS1 and SHC1. This is GRB10-interacting GYF protein 1 (GIGYF1) from Homo sapiens (Human).